Here is a 432-residue protein sequence, read N- to C-terminus: Enolase (432 aa).

Glutamine 167 is a binding site for (2R)-2-phosphoglycerate. Residue glutamate 209 is the Proton donor of the active site. Positions 246, 291, and 318 each coordinate Mg(2+). Positions 343, 372, 373, and 394 each coordinate (2R)-2-phosphoglycerate. Residue lysine 343 is the Proton acceptor of the active site.

It belongs to the enolase family. Component of the RNA degradosome, a multiprotein complex involved in RNA processing and mRNA degradation. It depends on Mg(2+) as a cofactor.

It is found in the cytoplasm. The protein resides in the secreted. It localises to the cell surface. The enzyme catalyses (2R)-2-phosphoglycerate = phosphoenolpyruvate + H2O. The protein operates within carbohydrate degradation; glycolysis; pyruvate from D-glyceraldehyde 3-phosphate: step 4/5. In terms of biological role, catalyzes the reversible conversion of 2-phosphoglycerate (2-PG) into phosphoenolpyruvate (PEP). It is essential for the degradation of carbohydrates via glycolysis. The polypeptide is Enolase (Aliivibrio salmonicida (strain LFI1238) (Vibrio salmonicida (strain LFI1238))).